Here is a 312-residue protein sequence, read N- to C-terminus: Glyoxylate/hydroxypyruvate reductase A (312 aa).

R227 is a catalytic residue. H275 (proton donor) is an active-site residue.

Belongs to the D-isomer specific 2-hydroxyacid dehydrogenase family. GhrA subfamily.

It is found in the cytoplasm. The catalysed reaction is glycolate + NADP(+) = glyoxylate + NADPH + H(+). It catalyses the reaction (R)-glycerate + NAD(+) = 3-hydroxypyruvate + NADH + H(+). It carries out the reaction (R)-glycerate + NADP(+) = 3-hydroxypyruvate + NADPH + H(+). Catalyzes the NADPH-dependent reduction of glyoxylate and hydroxypyruvate into glycolate and glycerate, respectively. In Escherichia coli (strain ATCC 8739 / DSM 1576 / NBRC 3972 / NCIMB 8545 / WDCM 00012 / Crooks), this protein is Glyoxylate/hydroxypyruvate reductase A.